Here is a 431-residue protein sequence, read N- to C-terminus: MSLRTSYSVRSSTSQVPVSQVSIKRTTNVPTYRAASIYGGAGGQGTRISSASYSGVRSGLGVPSMSSSIQVSASGSTGEIMGNEKMAMQNLNDRLASYLEKVRILEQANSKLELKIREALEKRGPDVHDYSRFQPIVDELRKKIFDATTNNARLVLQIDNARLAADDFRVKYESELSIRQGVEADITGLRKVIDDTNLNRMNLESEIEALKEELIFLKKNHDNEVMELRNQISQSGVQVDVDAPKGQDLSQIMEEIRAKYEKMALKNQEELKAWHESQITEVQVQVTQNTEALQGARSEVNELRRQIQTLEIELESQKNLKGSLEGTLRDTEMRYNMEIENLNTIILQLEAELTQLRGNIQHQTQEYEALLNIKMKLEAEIATYRRLLDGGDFKLQDALEEQKKVKVMTVTQTLVDGKVVSSSTETKERKL.

Residues 2–83 (SLRTSYSVRS…SGSTGEIMGN (82 aa)) form a head region. At Ser12 the chain carries Phosphoserine. The residue at position 13 (Thr13) is a Phosphothreonine. Residues Ser22 and Ser36 each carry the phosphoserine modification. The coil 1A stretch occupies residues 84–119 (EKMAMQNLNDRLASYLEKVRILEQANSKLELKIREA). In terms of domain architecture, IF rod spans 84-395 (EKMAMQNLND…RLLDGGDFKL (312 aa)). Residues 120–136 (LEKRGPDVHDYSRFQPI) are linker 1. Residues 137-228 (VDELRKKIFD…KNHDNEVMEL (92 aa)) form a coil 1B region. Positions 229–252 (RNQISQSGVQVDVDAPKGQDLSQI) are linker 12. Positions 253–390 (MEEIRAKYEK…IATYRRLLDG (138 aa)) are coil 2. Residues 391-431 (GDFKLQDALEEQKKVKVMTVTQTLVDGKVVSSSTETKERKL) are tail.

Belongs to the intermediate filament family. Heterotetramer of two type I and two type II keratins. Keratin-18 associates with keratin-8. In terms of processing, proteolytically cleaved by caspases during epithelial cell apoptosis. As to expression, expressed in simple epithelia such as intestinal mucosa, bile duct, hepatocytes, renal tubules, endothelia, ocular lens epithelium, and in a variety of mesenchymally-derived cells such as blood vessel endothelia, pillar gill cells, optic nerve glial cells, fibroblasts, interstitial cells, chondrocytes and ovarian theca cells. Also expressed in epidermis, pharyngeal mucosa, mucosa of anterior esophagus, gill mucosa and cornea.

Functionally, when phosphorylated, plays a role in filament reorganization. The chain is Keratin, type I cytoskeletal 18 from Danio rerio (Zebrafish).